We begin with the raw amino-acid sequence, 514 residues long: MSHNAPLVLMILDGWGYNENDRYNAIAKANTPQWDEWWQTCPHILLKASGLPVGLPDEQMGNSEVGHMHIGAGRVIQQDFTRINEAINNGKFAKNAVFHEVIDQLKKTEKSLHIMGLLSPGGVHSHEQHLFALLALCNQKKFRSVHLHLFLDGRDTPPQSALDSLKCLNEELVKHPVATINSICGRYYAMDRDKRWERVEPVYNLLTQGKSEHQFPDAETAIHFYYKNKISDEFVPPTLIGKEHSIQDGDAVLFFNFRADRARQLTSTFLDPLFKGFERKTLPKLSYFVSMTQYDKNLITTIAFPPVPLNNTLGEVLSSHGLSQLRIAETEKYAHVTFFFNGGCESVFTNEERIMVPSPQVATYDLQPEMSAPELTKTLIAAINSRDYHVIICNYANADMVGHTGNFEATVQAIECLDQCMHQVWQALKNNGGKLLITADHGNAEEMFSEATNQAHTAHTSEPVPFLYVGGGWHFTHAEGSLIDIAPSLLALLGITPPPEMTGRILLEKNHAHV.

2 residues coordinate Mn(2+): aspartate 13 and serine 63. Serine 63 acts as the Phosphoserine intermediate in catalysis. Substrate is bound by residues histidine 124, arginine 154–aspartate 155, arginine 186, arginine 192, arginine 258–arginine 261, and lysine 332. Positions 399, 403, 440, 441, and 459 each coordinate Mn(2+).

This sequence belongs to the BPG-independent phosphoglycerate mutase family. In terms of assembly, monomer. It depends on Mn(2+) as a cofactor.

The enzyme catalyses (2R)-2-phosphoglycerate = (2R)-3-phosphoglycerate. Its pathway is carbohydrate degradation; glycolysis; pyruvate from D-glyceraldehyde 3-phosphate: step 3/5. Functionally, catalyzes the interconversion of 2-phosphoglycerate and 3-phosphoglycerate. This chain is 2,3-bisphosphoglycerate-independent phosphoglycerate mutase, found in Legionella pneumophila (strain Corby).